A 213-amino-acid polypeptide reads, in one-letter code: Thymidylate kinase (213 aa).

Position 10-17 (10-17 (GPDGAGKT)) interacts with ATP.

It belongs to the thymidylate kinase family.

It catalyses the reaction dTMP + ATP = dTDP + ADP. Its function is as follows. Phosphorylation of dTMP to form dTDP in both de novo and salvage pathways of dTTP synthesis. The chain is Thymidylate kinase from Limosilactobacillus reuteri (strain DSM 20016) (Lactobacillus reuteri).